We begin with the raw amino-acid sequence, 94 residues long: MFTINAEVRKEQGKGASRRLRAANKFPAIIYGGKEAPLAVELDHDKVMNMQVKAEFYSEVLTIVVDGKEIKVKAQDVQRHPYKPKLLHIDFVRA.

The protein belongs to the bacterial ribosomal protein bL25 family. In terms of assembly, part of the 50S ribosomal subunit; part of the 5S rRNA/L5/L18/L25 subcomplex. Contacts the 5S rRNA. Binds to the 5S rRNA independently of L5 and L18.

This is one of the proteins that binds to the 5S RNA in the ribosome where it forms part of the central protuberance. This chain is Large ribosomal subunit protein bL25, found in Escherichia coli O6:K15:H31 (strain 536 / UPEC).